The following is a 166-amino-acid chain: T-cell surface glycoprotein CD3 zeta chain (166 aa).

The N-terminal stretch at 1–21 is a signal peptide; sequence MKWTALVIVAVLQTQFPVTAA. Topologically, residues 22 to 30 are extracellular; sequence QSFGLLDPK. A helical transmembrane segment spans residues 31–51; that stretch reads LCYLLDGILFIYGVIVTALFL. Topologically, residues 52 to 166 are cytoplasmic; it reads RAKFSRSADA…ALHMQALPPR (115 aa). S58 carries the phosphoserine modification. ITAM domains lie at 61–89, 100–128, and 133–161; these read APAY…LDRR, PQRK…EIGM, and QRRR…LHMQ. Phosphotyrosine is present on residues Y64, Y72, Y83, Y111, Y123, Y144, and Y155. The tract at residues 126 to 156 is disordered; it reads IGMKSDNQRRRGKGHDGVYQGLSTATKDTYD.

Belongs to the CD3Z/FCER1G family. The TCR-CD3 complex is composed of a CD3D/CD3E and a CD3G/CD3E heterodimers that preferentially associate with TCRalpha and TCRbeta, respectively, to form TCRalpha/CD3E/CD3G and TCRbeta/CD3G/CD3E trimers. In turn, the hexamer interacts with CD3Z homodimer to form the TCR-CD3 complex. Alternatively, TCRalpha and TCRbeta can be replaced by TCRgamma and TCRdelta. Interacts with SLA. Interacts with TRAT1. Interacts with DOCK2. Interacts with SLA2. Interacts with SHB. Interacts with ZAP70. Interacts (tyrosine phosphorylated) with SHC1 (via SH2 domain). Interacts with PTPRC. Interacts with CRK; this interaction regulates CD3Z phosphorylation. Interacts (on T cell side) with CD81, ICAM1 and CD9 at immunological synapses between antigen-presenting cells and T cells. Interacts with CD160. Interacts with LY6E. Interacts with LY6E. The signaling subunit of immunoglobulin gamma (IgG) Fc receptor complex. As a homodimer or a heterodimer with FCER1G, associates with the ligand binding subunit FCGR3A (via transmembrane domain); this interaction is a prerequisite for Fc receptor complex expression on the cell surface. Interacts with CD5. Phosphorylated on Tyr residues after T-cell receptor triggering by LCK in association with CD4/CD8.

Its subcellular location is the cell membrane. Part of the TCR-CD3 complex present on T-lymphocyte cell surface that plays an essential role in adaptive immune response. When antigen presenting cells (APCs) activate T-cell receptor (TCR), TCR-mediated signals are transmitted across the cell membrane by the CD3 chains CD3D, CD3E, CD3G and CD3Z. All CD3 chains contain immunoreceptor tyrosine-based activation motifs (ITAMs) in their cytoplasmic domain. Upon TCR engagement, these motifs become phosphorylated by Src family protein tyrosine kinases LCK and FYN, resulting in the activation of downstream signaling pathways. CD3Z ITAMs phosphorylation creates multiple docking sites for the protein kinase ZAP70 leading to ZAP70 phosphorylation and its conversion into a catalytically active enzyme. Plays an important role in intrathymic T-cell differentiation. Additionally, participates in the activity-dependent synapse formation of retinal ganglion cells (RGCs) in both the retina and dorsal lateral geniculate nucleus (dLGN). The chain is T-cell surface glycoprotein CD3 zeta chain (CD247) from Ovis aries (Sheep).